A 451-amino-acid polypeptide reads, in one-letter code: Enolase (451 aa).

Gln163 contacts (2R)-2-phosphoglycerate. Glu205 serves as the catalytic Proton donor. Mg(2+) is bound by residues Asp258, Glu308, and Asp335. Residues Lys360, Arg389, Ser390, and Lys411 each coordinate (2R)-2-phosphoglycerate. The active-site Proton acceptor is the Lys360.

Belongs to the enolase family. Requires Mg(2+) as cofactor.

Its subcellular location is the cytoplasm. The protein localises to the secreted. The protein resides in the cell surface. It carries out the reaction (2R)-2-phosphoglycerate = phosphoenolpyruvate + H2O. The protein operates within carbohydrate degradation; glycolysis; pyruvate from D-glyceraldehyde 3-phosphate: step 4/5. In terms of biological role, catalyzes the reversible conversion of 2-phosphoglycerate (2-PG) into phosphoenolpyruvate (PEP). It is essential for the degradation of carbohydrates via glycolysis. This Mycoplasma mycoides subsp. mycoides SC (strain CCUG 32753 / NCTC 10114 / PG1) protein is Enolase.